Reading from the N-terminus, the 144-residue chain is Large ribosomal subunit protein uL13 (144 aa).

This sequence belongs to the universal ribosomal protein uL13 family. Part of the 50S ribosomal subunit.

This protein is one of the early assembly proteins of the 50S ribosomal subunit, although it is not seen to bind rRNA by itself. It is important during the early stages of 50S assembly. The sequence is that of Large ribosomal subunit protein uL13 from Mesomycoplasma hyopneumoniae (strain 232) (Mycoplasma hyopneumoniae).